The sequence spans 250 residues: 2,3-bisphosphoglycerate-dependent phosphoglycerate mutase (250 aa).

Substrate contacts are provided by residues 8–15 (RHGESQWN), 21–22 (TG), arginine 60, 87–90 (ERHY), lysine 98, 114–115 (RR), and 183–184 (GN). Histidine 9 (tele-phosphohistidine intermediate) is an active-site residue. Glutamate 87 functions as the Proton donor/acceptor in the catalytic mechanism.

Belongs to the phosphoglycerate mutase family. BPG-dependent PGAM subfamily. In terms of assembly, homodimer.

It carries out the reaction (2R)-2-phosphoglycerate = (2R)-3-phosphoglycerate. Its pathway is carbohydrate degradation; glycolysis; pyruvate from D-glyceraldehyde 3-phosphate: step 3/5. Its function is as follows. Catalyzes the interconversion of 2-phosphoglycerate and 3-phosphoglycerate. The chain is 2,3-bisphosphoglycerate-dependent phosphoglycerate mutase from Bordetella pertussis (strain Tohama I / ATCC BAA-589 / NCTC 13251).